Here is a 122-residue protein sequence, read N- to C-terminus: Large ribosomal subunit protein uL14 (122 aa).

It belongs to the universal ribosomal protein uL14 family. As to quaternary structure, part of the 50S ribosomal subunit. Forms a cluster with proteins L3 and L19. In the 70S ribosome, L14 and L19 interact and together make contacts with the 16S rRNA in bridges B5 and B8.

Binds to 23S rRNA. Forms part of two intersubunit bridges in the 70S ribosome. The sequence is that of Large ribosomal subunit protein uL14 from Chlamydia abortus (strain DSM 27085 / S26/3) (Chlamydophila abortus).